The chain runs to 1149 residues: Beta-alanine-activating enzyme (1149 aa).

Residues 178-186 (TSGTTGLPK), Asp408, Arg422, and Lys543 each bind ATP. One can recognise a Carrier domain in the interval 570–646 (ASVRLKLQNL…DLLSHIMTET (77 aa)). Ser605 bears the O-(pantetheine 4'-phosphoryl)serine mark. Residues 653-683 (PSKKRTADYSDSEASGKRQHKEMTTSSDTES) form a disordered region.

This sequence belongs to the ATP-dependent AMP-binding enzyme family.

Covalently binds beta-alanine in an ATP-dependent manner to form a thioester bond with its phosphopantetheine group and transfers it to an, as yet, unknown acceptor. May be required for a post-translational protein modification or for post-transcriptional modification of an RNA. The protein is Beta-alanine-activating enzyme (aasdh) of Danio rerio (Zebrafish).